The sequence spans 593 residues: Methylenetetrahydrofolate reductase (NADH) 1 (593 aa).

Glu-21 acts as the Proton donor/acceptor in catalysis. NAD(+) is bound by residues 21-26 (EYFPPK) and 52-53 (TW). Residues 52–53 (TW), His-81, 111–113 (RGD), Tyr-153, 157–160 (HPDA), Asp-175, and Lys-182 each bind FAD. Asp-113 serves as a coordination point for substrate. Residues Gln-193 and Tyr-285 each coordinate substrate.

Belongs to the methylenetetrahydrofolate reductase family. In terms of assembly, homodimer. Requires FAD as cofactor.

The catalysed reaction is (6S)-5-methyl-5,6,7,8-tetrahydrofolate + NAD(+) = (6R)-5,10-methylene-5,6,7,8-tetrahydrofolate + NADH + H(+). It functions in the pathway one-carbon metabolism; tetrahydrofolate interconversion. Plant MTHFRs strongly prefer NADH over NADPH. Not inhibited by methionine or S-adenosylmethionine. Its function is as follows. The probable reversibility of the MTHFR reaction in plants suggests that they can metabolize the methyl group of 5,10-methylenetetrahydrofolate to serine, sugars and starch. This chain is Methylenetetrahydrofolate reductase (NADH) 1, found in Zea mays (Maize).